The primary structure comprises 428 residues: 26S proteasome regulatory subunit 6B homolog (428 aa).

Position 1 is an N-acetylmethionine (M1). 213–220 (GPPGTGKT) is a binding site for ATP. K280 is covalently cross-linked (Glycyl lysine isopeptide (Lys-Gly) (interchain with G-Cter in ubiquitin)).

It belongs to the AAA ATPase family. Post-translationally, N-acetylated by NAT3.

It is found in the cytoplasm. The protein localises to the nucleus. The 26S proteasome is involved in the ATP-dependent degradation of ubiquitinated proteins. The regulatory (or ATPase) complex confers ATP dependency and substrate specificity to the 26S complex. The polypeptide is 26S proteasome regulatory subunit 6B homolog (RPT3) (Saccharomyces cerevisiae (strain ATCC 204508 / S288c) (Baker's yeast)).